The primary structure comprises 617 residues: Protein DWARF AND LOW-TILLERING (617 aa).

2 disordered regions span residues 29–92 and 159–206; these read KRGS…HDED and PSLA…GVPA. Residues 171 to 187 are compositionally biased toward low complexity; sequence KSPSDSSSSSGTDGGSS. The GRAS domain maps to 208 to 594; it reads GQAEREALEL…QPLYTVTAWT (387 aa). The segment at 215–295 is leucine repeat I (LRI); the sequence is LELVRALTAC…LTDDAFGGGD (81 aa). The tract at residues 301 to 366 is VHIID; that stretch reads LRILNAITPI…VPPAHVRITG (66 aa). Positions 332 to 336 match the VHIID motif; it reads VHVID. The interval 376–408 is leucine repeat II (LRII); sequence ETGARLARVAAALGLAFEFHAVVDRLEDVRLWM. The PFYRE stretch occupies residues 417–508; that stretch reads VAVNCVLAMH…EEMFAREIRN (92 aa). The tract at residues 511-594 is SAW; sequence AFEGPERFER…QPLYTVTAWT (84 aa). The segment at 596 to 617 is disordered; that stretch reads AGDGAGGSTVSASTTASHSQQS. Over residues 603-617 the composition is skewed to low complexity; that stretch reads STVSASTTASHSQQS.

This sequence belongs to the GRAS family. Interacts with GSK2. Interacts with SMOS1 (via C-terminus). Phosphorylated on serine and threonine residues by GSK2. Dephosphorylated during response to brassinosteroid. In terms of tissue distribution, expressed in the shoot apical meristem (SAM) and elongating cells of young seedlings. Expressed in leaf joints, culms, internodes, stems, young panicles, primary roots and lateral roots.

The protein localises to the nucleus. Probable transcription factor that acts as a positive regulator of brassinosteroid (BR) signaling. Functions downstream of BRI1 and GSK2 to modulate BR responses. Acts as a direct target of GSK2 kinase to mediate BR responses. Involved in feedback inhibition of BR biosynthetic genes. Repressed by BZR1. Cooperatively functions in a transactivating complex with SMOS1 to enhance the transcription of the SMOS1 target PHI-1, and regulate plant organ size. Interaction between SMOS1 and DLT is a crosstalk point for auxin and brassinosteroid signaling. The sequence is that of Protein DWARF AND LOW-TILLERING from Oryza sativa subsp. japonica (Rice).